Consider the following 328-residue polypeptide: Arabinose 5-phosphate isomerase KdsD (328 aa).

The region spanning 41–184 is the SIS domain; the sequence is ACEKMFNCTG…AVALLKARGF (144 aa). Substrate is bound by residues 75 to 76, histidine 82, histidine 88, 114 to 123, and 148 to 150; these read GT, ALIPVLKRLH, and KVP. Position 82 (histidine 82) interacts with Zn(2+). Residues 210 to 268 enclose the CBS 1 domain; sequence MHTGDEIPHVNKHATLRDALLEITRKNLGMTVICDESMKIDGIFTDGDLRRVFDMGGDM. Glutamate 275 contacts substrate. The region spanning 277-328 is the CBS 2 domain; the sequence is MTPGGIRVRPGILAVDALNLMQSRHITSVLVADGDQLLGVLHMHDLLRAGVV.

The protein belongs to the SIS family. GutQ/KpsF subfamily. Homotetramer.

It carries out the reaction D-arabinose 5-phosphate = D-ribulose 5-phosphate. The protein operates within carbohydrate biosynthesis; 3-deoxy-D-manno-octulosonate biosynthesis; 3-deoxy-D-manno-octulosonate from D-ribulose 5-phosphate: step 1/3. Its pathway is bacterial outer membrane biogenesis; lipopolysaccharide biosynthesis. Functionally, involved in the biosynthesis of 3-deoxy-D-manno-octulosonate (KDO), a unique 8-carbon sugar component of lipopolysaccharides (LPSs). Catalyzes the reversible aldol-ketol isomerization between D-ribulose 5-phosphate (Ru5P) and D-arabinose 5-phosphate (A5P). This chain is Arabinose 5-phosphate isomerase KdsD (kdsD), found in Salmonella typhimurium (strain LT2 / SGSC1412 / ATCC 700720).